Here is a 553-residue protein sequence, read N- to C-terminus: Non-SCF-type F-box protein ROY1 (553 aa).

Positions phenylalanine 3 to isoleucine 49 constitute an F-box domain.

Interacts with SKP1 and YPT32; SKP1 is required for the interaction with YPT32.

It localises to the cytoplasm. The protein localises to the nucleus. It is found in the cytoplasmic vesicle membrane. Functionally, non-SCF-type F-box protein involved in the endocytic with the vacuolar sorting pathway. Acts as a repressor of YPT52 by inhibiting the formation of active, GTP-bound, YPT52. Involved in the defense mechanism against methylmercury toxicity. In Saccharomyces cerevisiae (strain ATCC 204508 / S288c) (Baker's yeast), this protein is Non-SCF-type F-box protein ROY1 (ROY1).